The following is a 357-amino-acid chain: 3-isopropylmalate dehydrogenase (357 aa).

Residues R97, R107, R135, and D224 each contribute to the substrate site. D224, D248, and D252 together coordinate Mg(2+). Position 282 to 294 (282 to 294) interacts with NAD(+); that stretch reads GSAPDIAGQDKAN.

This sequence belongs to the isocitrate and isopropylmalate dehydrogenases family. LeuB type 1 subfamily. Homodimer. Mg(2+) serves as cofactor. The cofactor is Mn(2+).

The protein resides in the cytoplasm. The catalysed reaction is (2R,3S)-3-isopropylmalate + NAD(+) = 4-methyl-2-oxopentanoate + CO2 + NADH. It participates in amino-acid biosynthesis; L-leucine biosynthesis; L-leucine from 3-methyl-2-oxobutanoate: step 3/4. Its function is as follows. Catalyzes the oxidation of 3-carboxy-2-hydroxy-4-methylpentanoate (3-isopropylmalate) to 3-carboxy-4-methyl-2-oxopentanoate. The product decarboxylates to 4-methyl-2 oxopentanoate. This is 3-isopropylmalate dehydrogenase from Synechococcus sp. (strain CC9902).